A 274-amino-acid chain; its full sequence is NAD(P)H dehydrogenase [quinone] 1 (274 aa).

Residues H12, 18–19, and Q67 contribute to the FAD site; that span reads FN. S82 bears the Phosphoserine mark. 104-107 is an FAD binding site; the sequence is LQWF. 126–128 contributes to the substrate binding site; it reads AYT. Residues 148 to 151, Y156, and R201 each bind FAD; that span reads TTGG. The important for apoenzyme conformational stability stretch occupies residues 225–274; it reads PSSLFDLNFQAGFLMKKEVQDEEKNKKFGLSVGHHLGKSIPTDNQIKARK. Residues K250 and K251 each participate in a glycyl lysine isopeptide (Lys-Gly) (interchain with G-Cter in SUMO2) cross-link.

It belongs to the NAD(P)H dehydrogenase (quinone) family. In terms of assembly, homodimer. Interacts with PDLIM4 isoform 2; this interaction stabilizes PDLIM4 isoform 2 in response to oxidative stress and protects it from ubiquitin-independent degradation by the core 20S proteasome. Interacts with TP73 (via SAM domain); this interaction is NADH-dependent, stabilizes TP73 in response to oxidative stress and protects it from ubiquitin-independent degradation by the 20S proteasome. Interacts with TP53; this interaction is NADH-dependent, stabilizes TP53 in response to oxidative stress and protects it from ubiquitin-independent degradation by the 20S proteasome. FAD serves as cofactor.

It is found in the cytoplasm. The protein localises to the cytosol. It carries out the reaction a quinone + NADH + H(+) = a quinol + NAD(+). The catalysed reaction is a quinone + NADPH + H(+) = a quinol + NADP(+). The enzyme catalyses ubiquinone-10 + NADH + H(+) = ubiquinol-10 + NAD(+). It catalyses the reaction menadione + NADH + H(+) = menadiol + NAD(+). Functionally, flavin-containing quinone reductase that catalyzes two-electron reduction of quinones to hydroquinones using either NADH or NADPH as electron donors. In a ping-pong kinetic mechanism, the electrons are sequentially transferred from NAD(P)H to flavin cofactor and then from reduced flavin to the quinone, bypassing the formation of semiquinone and reactive oxygen species. Regulates cellular redox state primarily through quinone detoxification. Reduces components of plasma membrane redox system such as coenzyme Q and vitamin quinones, producing antioxidant hydroquinone forms. In the process may function as superoxide scavenger to prevent hydroquinone oxidation and facilitate excretion. Alternatively, can activate quinones and their derivatives by generating redox reactive hydroquinones with DNA cross-linking antitumor potential. Acts as a gatekeeper of the core 20S proteasome known to degrade proteins with unstructured regions. Upon oxidative stress, interacts with tumor suppressors TP53 and TP73 in a NADH-dependent way and inhibits their ubiquitin-independent degradation by the 20S proteasome. In Pongo abelii (Sumatran orangutan), this protein is NAD(P)H dehydrogenase [quinone] 1 (NQO1).